Here is a 648-residue protein sequence, read N- to C-terminus: 5-aminolevulinate synthase, mitochondrial (648 aa).

The transit peptide at methionine 1–leucine 26 directs the protein to the mitochondrion. A disordered region spans residues lysine 69–serine 109. Substrate-binding residues include arginine 170, serine 283, and lysine 302. Residues serine 335, histidine 363, and threonine 409 each contribute to the pyridoxal 5'-phosphate site. The active site involves lysine 412. N6-(pyridoxal phosphate)lysine is present on lysine 412. Pyridoxal 5'-phosphate contacts are provided by threonine 441 and threonine 442. Threonine 527 lines the substrate pocket.

This sequence belongs to the class-II pyridoxal-phosphate-dependent aminotransferase family. Homodimer. Pyridoxal 5'-phosphate is required as a cofactor.

The protein resides in the mitochondrion matrix. The enzyme catalyses succinyl-CoA + glycine + H(+) = 5-aminolevulinate + CO2 + CoA. The protein operates within porphyrin-containing compound metabolism; protoporphyrin-IX biosynthesis; 5-aminolevulinate from glycine: step 1/1. Its function is as follows. Catalyzes the synthesis of 5-aminolevulinate (ALA) from succinyl-CoA and glycine, the first and rate-limiting step in heme biosynthesis. The chain is 5-aminolevulinate synthase, mitochondrial (hemA) from Emericella nidulans (strain FGSC A4 / ATCC 38163 / CBS 112.46 / NRRL 194 / M139) (Aspergillus nidulans).